Here is a 577-residue protein sequence, read N- to C-terminus: Leucine-rich repeat protein soc-2 homolog (577 aa).

2 stretches are compositionally biased toward basic and acidic residues: residues 1 to 10 (MRRTKGRTDS) and 33 to 48 (STAHKSDKKHDPEAKK). The disordered stretch occupies residues 1 to 71 (MRRTKGRTDS…PTVKKRSTPS (71 aa)). 20 LRR repeats span residues 87-109 (GATRLDLSKAAVTVLPKELKELT), 110-131 (SLRELYLYGNRIAVLPPEVGLL), 133-155 (NLETLALSENNLTTLPDNLVKLT), 156-177 (KLKVLDLRHNKIKEIPDVIYKL), 179-201 (TLTTLYLRFNRISVVESGIGNLK), 202-223 (LLERLSLRENKIKILPRVIGQL), 225-246 (HLVTLDISHNHIENLPAEIGNC), 248-269 (HMTSLDLQHNDIPSLPDSIGRL), 271-292 (AMTRLGLRYNQLSSLPDSLANC), 294-315 (GIDEFNIEGNNIAELPEKLLSS), 318-339 (NLTSLTLSRNKFEVFPAGPPKQ), 342-363 (QVNTFIMEHNRMQKIPFGVFNK), 366-387 (YLSKLNVKDNQLTSLPLDFGSW), 389-410 (SLVELNVATNQISKLPEDIQWL), 412-434 (NLEVLILSNNLLKKLPRGIGALR), 435-456 (KLRVLDIEENKLESIPTEIEYL), 458-479 (SLERLVLQSNCLGSLPRSIGYL), 481-502 (SVTYLSVGENELVSVPQEIGNM), 504-526 (SLEQLYLNDNENLQSLPYELVLC), and 528-549 (SLQIMSIENCPLSALPSQIVAG).

The protein belongs to the SHOC2 family.

Functionally, acts as a Ras effector and participates in MAPK pathway activation. Probably acts as a scaffolding protein in a protein phosphatase complex that specifically dephosphorylates Raf kinase and stimulate Raf activity at specialized signaling complexes upon Ras activation. The polypeptide is Leucine-rich repeat protein soc-2 homolog (Nematostella vectensis (Starlet sea anemone)).